The primary structure comprises 419 residues: UDP-N-acetylglucosamine 1-carboxyvinyltransferase (419 aa).

Position 22-23 (Lys22–Asn23) interacts with phosphoenolpyruvate. Arg95 is a binding site for UDP-N-acetyl-alpha-D-glucosamine. Catalysis depends on Cys119, which acts as the Proton donor. At Cys119 the chain carries 2-(S-cysteinyl)pyruvic acid O-phosphothioketal. Residues Lys164–Val167, Asp308, and Ile330 contribute to the UDP-N-acetyl-alpha-D-glucosamine site.

The protein belongs to the EPSP synthase family. MurA subfamily.

The protein localises to the cytoplasm. It catalyses the reaction phosphoenolpyruvate + UDP-N-acetyl-alpha-D-glucosamine = UDP-N-acetyl-3-O-(1-carboxyvinyl)-alpha-D-glucosamine + phosphate. It participates in cell wall biogenesis; peptidoglycan biosynthesis. In terms of biological role, cell wall formation. Adds enolpyruvyl to UDP-N-acetylglucosamine. The sequence is that of UDP-N-acetylglucosamine 1-carboxyvinyltransferase from Rickettsia prowazekii (strain Madrid E).